The sequence spans 461 residues: Chromosomal replication initiator protein DnaA (461 aa).

The interval 1–84 (MAVSLWQQCI…RFDIGSRPSA (84 aa)) is domain I, interacts with DnaA modulators. The tract at residues 84 to 124 (AKKFEPAPVATVRAPNTQTKATVGTYFNTQAEPIANANHRS) is domain II. Residues 125 to 341 (NINPTYQFDN…GALNRVIANA (217 aa)) are domain III, AAA+ region. The ATP site is built by G169, G171, K172, and T173. A domain IV, binds dsDNA region spans residues 342-461 (NFTGRPITID…YANLIRTLSS (120 aa)).

This sequence belongs to the DnaA family. As to quaternary structure, oligomerizes as a right-handed, spiral filament on DNA at oriC.

It is found in the cytoplasm. In terms of biological role, plays an essential role in the initiation and regulation of chromosomal replication. ATP-DnaA binds to the origin of replication (oriC) to initiate formation of the DNA replication initiation complex once per cell cycle. Binds the DnaA box (a 9 base pair repeat at the origin) and separates the double-stranded (ds)DNA. Forms a right-handed helical filament on oriC DNA; dsDNA binds to the exterior of the filament while single-stranded (ss)DNA is stabiized in the filament's interior. The ATP-DnaA-oriC complex binds and stabilizes one strand of the AT-rich DNA unwinding element (DUE), permitting loading of DNA polymerase. After initiation quickly degrades to an ADP-DnaA complex that is not apt for DNA replication. Binds acidic phospholipids. This Shewanella putrefaciens (strain CN-32 / ATCC BAA-453) protein is Chromosomal replication initiator protein DnaA.